Reading from the N-terminus, the 241-residue chain is MORN repeat-containing protein 3 (241 aa).

Positions 6–35 are interaction with MDM2; sequence CPQKSEPLWKEWDQKAQKNGLRHQVFAVNG. MORN repeat units lie at residues 38 to 60, 62 to 84, 91 to 113, 114 to 136, 137 to 159, 160 to 182, and 184 to 205; these read YVGEWKDNVKHGKGTQVWKKNGA, YEGDWKSGKRDGYGTLSLPDQET, YSGWWKGDKKCGYGIQFFGPKEY, YEGDWCGNQRSGWGRMYYSNGDI, YEGQWRNDKPEGEGMLRLKNGNR, YEGNWQRGVKNGSGRFFHLDHGQ, and FEGFWVDDVAKCGTMIDFGRDE. Residues 76–100 are interaction with SIRT1; that stretch reads TLSLPDQETGKYKRAYSGWWKGDKK. Positions 206 to 240 are interaction with TP53; sequence APQPTQFPIPEVKILDPDGVLEEALAMFKKTKEEG.

As to quaternary structure, interacts with MEIG1. Interacts with TP53, MDM2 and SIRT1; the interactions mediate post-transcriptional modifications of TP53 by MDM2 and SIRT1.

The protein localises to the cytoplasmic vesicle. It localises to the secretory vesicle. It is found in the acrosome. Its function is as follows. Assembles a suppression complex (suppresome) by tethering SIRT1 and MDM2 to regulate composite modifications of p53/TP53. Confers both deacetylation-mediated functional inactivation, by SIRT1, and ubiquitination-dependent degradation, by MDM2, of p53/TP53, promoting a proliferative and cell survival behaviors. May play a role in the regulation of spermatogenesis. The chain is MORN repeat-containing protein 3 (MORN3) from Bos taurus (Bovine).